A 66-amino-acid polypeptide reads, in one-letter code: AKVANSTDSSSLAEVIDRILDKGIVIDAWVKVSLVGIELLAIEARVVVASVETYLKYAEAIGLTIP.

It belongs to the gas vesicle GvpA family. The gas vesicle shell is 2 nm thick and consists of a single layer of this protein. It forms helical ribs nearly perpendicular to the long axis of the vesicle.

It localises to the gas vesicle shell. Gas vesicles are hollow, gas filled proteinaceous nanostructures found in some microorganisms. During planktonic growth they allow positioning of the organism at a favorable depth for light or nutrient acquisition. GvpA forms the protein shell. The protein is Gas vesicle protein A of Thiocapsa pendens (Amoebobacter pendens).